Here is a 1542-residue protein sequence, read N- to C-terminus: Pleiotropic ABC efflux transporter of multiple drugs PDH1 (1542 aa).

A compositionally biased stretch (low complexity) spans M1–S14. The tract at residues M1–D61 is disordered. Topologically, residues M1 to N517 are cytoplasmic. The span at N24 to A33 shows a compositional bias: basic and acidic residues. Polar residues predominate over residues S35–S47. The ABC transporter 1 domain maps to V153–K409. Helical transmembrane passes span S518–F540, F552–I574, V603–V625, F634–F652, L662–I684, and G773–C792. The Cytoplasmic portion of the chain corresponds to E793–D1220. Residues T825–I834 show a composition bias toward basic and acidic residues. Residues T825–T846 are disordered. The segment covering E835 to T846 has biased composition (polar residues). One can recognise an ABC transporter 2 domain in the interval F885–A1128. Residue G921–T928 participates in ATP binding. A run of 6 helical transmembrane segments spans residues Y1221 to F1241, S1256 to V1276, A1296 to A1316, L1342 to I1362, T1370 to A1390, and G1495 to A1515. Residues R1516 to F1542 are Cytoplasmic-facing.

It belongs to the ABC transporter superfamily. ABCG family. PDR (TC 3.A.1.205) subfamily. Phosphorylated by PKA. Dephosphorylated on glucose depletion and independently rephosphorylated during glucose exposure or under stress.

It is found in the cell membrane. Functionally, pleiotropic ABC efflux transporter that confers resistance to structurally and functionally unrelated compounds including caspofungin or azoles such as fluconazole, itraconazole, posaconazole, voriconazole, and isavuconazole. Does not play a role in the azole resistance in mature biofilms. This Candida glabrata (strain ATCC 2001 / BCRC 20586 / JCM 3761 / NBRC 0622 / NRRL Y-65 / CBS 138) (Yeast) protein is Pleiotropic ABC efflux transporter of multiple drugs PDH1.